The following is a 97-amino-acid chain: Prophage lipoprotein Bor homolog (97 aa).

The N-terminal stretch at 1-16 (MKKMLLATALALLITG) is a signal peptide. Residue C17 is the site of N-palmitoyl cysteine attachment. The S-diacylglycerol cysteine moiety is linked to residue C17.

This sequence belongs to the lambda phage bor family.

The protein resides in the cell membrane. This chain is Prophage lipoprotein Bor homolog (borD), found in Escherichia coli (strain K12).